The chain runs to 111 residues: Probable U2 small nuclear ribonucleoprotein B'' (111 aa).

Residues Asn4–Ser83 form the RRM domain.

As to quaternary structure, belongs to the 40S cdc5-associated complex (or cwf complex), a spliceosome sub-complex reminiscent of a late-stage spliceosome composed of the U2, U5 and U6 snRNAs and at least brr2, cdc5, cwf2/prp3, cwf3/syf1, cwf4/syf3, cwf5/ecm2, spp42/cwf6, cwf7/spf27, cwf8, cwf9, cwf10, cwf11, cwf12, prp45/cwf13, cwf14, cwf15, cwf16, cwf17, cwf18, cwf19, cwf20, cwf21, cwf22, cwf23, cwf24, cwf25, cwf26, cyp7/cwf27, cwf28, cwf29/ist3, lea1, msl1, prp5/cwf1, prp10, prp12/sap130, prp17, prp22, sap61, sap62, sap114, sap145, slu7, smb1, smd1, smd3, smf1, smg1 and syf2.

It localises to the nucleus. Its function is as follows. Involved in pre-mRNA splicing. This protein is associated with snRNP U2. It binds stem loop IV of U2 snRNA. This Schizosaccharomyces pombe (strain 972 / ATCC 24843) (Fission yeast) protein is Probable U2 small nuclear ribonucleoprotein B'' (msl1).